We begin with the raw amino-acid sequence, 137 residues long: Small ribosomal subunit protein uS8 (137 aa).

Belongs to the universal ribosomal protein uS8 family. As to quaternary structure, part of the 30S ribosomal subunit. Contacts proteins S5 and S12.

Its function is as follows. One of the primary rRNA binding proteins, it binds directly to 16S rRNA central domain where it helps coordinate assembly of the platform of the 30S subunit. This chain is Small ribosomal subunit protein uS8, found in Metamycoplasma arthritidis (strain 158L3-1) (Mycoplasma arthritidis).